The sequence spans 412 residues: Na(+)-translocating NADH-quinone reductase subunit B (412 aa).

3 consecutive transmembrane segments (helical) span residues 57 to 77, 127 to 147, and 163 to 183; these read MILV…NVGL, VFFL…EVLF, and SILF…ALGI. At Thr-236 the chain carries FMN phosphoryl threonine. A run of 5 helical transmembrane segments spans residues 270–290, 297–317, 322–342, 358–378, and 381–401; these read GSIG…ILFG, IVAG…VIGS, MFSM…GMMF, WSYG…NPAY, and GMML…YLVV.

The protein belongs to the NqrB/RnfD family. As to quaternary structure, composed of six subunits; NqrA, NqrB, NqrC, NqrD, NqrE and NqrF. FMN is required as a cofactor.

It is found in the cell inner membrane. It catalyses the reaction a ubiquinone + n Na(+)(in) + NADH + H(+) = a ubiquinol + n Na(+)(out) + NAD(+). In terms of biological role, NQR complex catalyzes the reduction of ubiquinone-1 to ubiquinol by two successive reactions, coupled with the transport of Na(+) ions from the cytoplasm to the periplasm. NqrA to NqrE are probably involved in the second step, the conversion of ubisemiquinone to ubiquinol. The protein is Na(+)-translocating NADH-quinone reductase subunit B of Klebsiella pneumoniae (strain 342).